The chain runs to 331 residues: UPF0324 membrane protein SACOL0411 (331 aa).

A run of 11 helical transmembrane segments spans residues F9 to A26, I31 to Y48, L69 to G88, L93 to L115, A122 to F144, S154 to F176, Y183 to G202, L217 to M234, I247 to P269, L273 to V295, and L308 to Y330.

The protein belongs to the UPF0324 family.

It localises to the cell membrane. This Staphylococcus aureus (strain COL) protein is UPF0324 membrane protein SACOL0411.